The chain runs to 209 residues: RNA chaperone ProQ (209 aa).

A disordered region spans residues 101–155; that stretch reads LAESKAKVQARRKEQAQKAREEGKAKAKPAANKKPQQPRRTNKPKVQKPTKPVET. A compositionally biased stretch (basic and acidic residues) spans 111–125; the sequence is RRKEQAQKAREEGKA. Basic residues predominate over residues 136-148; the sequence is QQPRRTNKPKVQK.

Belongs to the ProQ family.

It localises to the cytoplasm. RNA chaperone with significant RNA binding, RNA strand exchange and RNA duplexing activities. The sequence is that of RNA chaperone ProQ from Vibrio parahaemolyticus serotype O3:K6 (strain RIMD 2210633).